The chain runs to 683 residues: uncharacterized protein (683 aa).

14 helical membrane passes run 12–32, 41–61, 84–104, 110–130, 162–182, 194–214, 221–241, 377–397, 413–433, 495–515, 548–568, 573–593, 603–623, and 645–665; these read LLLYYGLFTLGLFGFVGMMGL, LWLGYVFLFITIAIYACIGLI, MAIAADWMSAASFIGLAGILF, GLAYVMGWTGGYCLVAFLLAP, IAVLAASLCSFVYLVAQIQGV, FAVGIFFGLAGILVCSFLGGM, QVAQYIMMIVAFLVTVSMIAW, LNFVLLVFCLMVGTASLPHIL, VAWAVFFIALLYVSAPTLAAL, IAGLPYVISGLIAAGALAAAL, VTTAKIVLLGVALFASYVTSL, ILFLVGAAFSLAASSFFPVLV, AAGAVAGMAAGLGVAVYYIIV, and IASGAFGVPAGFAVAIIVSLL.

Belongs to the sodium:solute symporter (SSF) (TC 2.A.21) family.

The protein localises to the cell membrane. This is an uncharacterized protein from Cupriavidus necator (strain ATCC 17699 / DSM 428 / KCTC 22496 / NCIMB 10442 / H16 / Stanier 337) (Ralstonia eutropha).